The sequence spans 955 residues: Anion exchange protein 4 (955 aa).

Disordered stretches follow at residues 20–50 (VGQL…PEDP), 154–190 (HTQT…PLRQ), and 331–352 (PHRT…PELQ). 4 helical membrane passes run 387–407 (AVLY…GLLG), 415–435 (GVLE…LMAG), 472–492 (VGIW…SVLV), and 503–523 (FCAL…LNLA). The segment at 387–955 (AVLYIYLATV…KAPEINISVN (569 aa)) is membrane (anion exchange). Residues Asn548 and Asn572 are each glycosylated (N-linked (GlcNAc...) asparagine). The next 7 helical transmembrane spans lie at 596 to 616 (VPDI…FAIA), 637 to 657 (FSSI…GLAM), 684 to 704 (PWWL…LIFM), 730 to 750 (LFCV…WYVS), 785 to 804 (LTGL…APVL), 811 to 830 (VLYG…IQFM), and 871 to 891 (LWII…LGLV). The tract at residues 918–955 (RNVPEKGLEPGHSFSGSDSEDSELMYQPKAPEINISVN) is disordered. Asn951 carries N-linked (GlcNAc...) asparagine glycosylation.

It belongs to the anion exchanger (TC 2.A.31) family. Highly expressed in kidney. Expressed in the outer medulla and the inner medulla in the kidney cortex. Only expressed in beta-intercalated cells.

Its subcellular location is the lateral cell membrane. It is found in the apical cell membrane. The protein resides in the basolateral cell membrane. It catalyses the reaction 2 hydrogencarbonate(out) + chloride(in) + Na(+)(out) = 2 hydrogencarbonate(in) + chloride(out) + Na(+)(in). The enzyme catalyses K(+)(in) + 2 hydrogencarbonate(in) + chloride(out) = K(+)(out) + 2 hydrogencarbonate(out) + chloride(in). The catalysed reaction is Li(+)(in) + 2 hydrogencarbonate(in) + chloride(out) = Li(+)(out) + 2 hydrogencarbonate(out) + chloride(in). It carries out the reaction Rb(+)(in) + 2 hydrogencarbonate(in) + chloride(out) = Rb(+)(out) + 2 hydrogencarbonate(out) + chloride(in). It catalyses the reaction Cs(+)(in) + 2 hydrogencarbonate(in) + chloride(out) = Cs(+)(out) + 2 hydrogencarbonate(out) + chloride(in). In terms of biological role, electroneutral Cl(-)/HCO3(-) antiporter that favors chloride ion entry and efflux of hydrogencarbonate and sodium ion across the basolateral membrane and may participat in salivary secretion. Also mediates Cl(-)/HCO3(-) exchange activity in the presence of K(+) as well as Cs(+), Li(+), and Rb(+). Does not contribute to Cl(-)/HCO3(-) exchanger in the apical membrane of the upper villous epithelium. The chain is Anion exchange protein 4 from Oryctolagus cuniculus (Rabbit).